A 223-amino-acid polypeptide reads, in one-letter code: Adenylate kinase (223 aa).

10 to 15 provides a ligand contact to ATP; that stretch reads GSGKGT. Residues 30-59 are NMP; that stretch reads ESGAIFRKHIGGGTELGMKAKEYIDKGELV. Residues serine 31, arginine 36, 57-59, 84-87, and glutamine 91 contribute to the AMP site; these read ELV and GFPR. The LID stretch occupies residues 125–164; that stretch reads GRRLCENDPNHPNNKFIDAIKPDGDKCRVCGGALSERADD. Arginine 126 is an ATP binding site. Residues arginine 161 and arginine 173 each coordinate AMP. Residue glycine 209 coordinates ATP.

This sequence belongs to the adenylate kinase family. As to quaternary structure, monomer.

Its subcellular location is the cytoplasm. It carries out the reaction AMP + ATP = 2 ADP. It participates in purine metabolism; AMP biosynthesis via salvage pathway; AMP from ADP: step 1/1. Its function is as follows. Catalyzes the reversible transfer of the terminal phosphate group between ATP and AMP. Plays an important role in cellular energy homeostasis and in adenine nucleotide metabolism. The sequence is that of Adenylate kinase from Maridesulfovibrio salexigens (strain ATCC 14822 / DSM 2638 / NCIMB 8403 / VKM B-1763) (Desulfovibrio salexigens).